The chain runs to 496 residues: Fibronectin type III and SPRY domain-containing protein 1 (496 aa).

The stretch at Gln4–Glu99 forms a coiled coil. Positions Leu105–Leu162 constitute a COS domain. In terms of domain architecture, Fibronectin type-III spans Val164 to Phe268. In terms of domain architecture, B30.2/SPRY spans Phe268 to Ala477. The interval Lys301 to Asp336 is disordered. Residues Arg310 and Arg320 each carry the omega-N-methylarginine modification.

Oligomerization is required for binding to microtubules. As to expression, highly expressed in brain tissues, including cerebellum, cerebral cortex, medulla, occipital pole, frontal lobe, temporal lobe and putamen. Lower expression in spinal cord.

Its subcellular location is the cytoplasm. It localises to the cytoskeleton. The protein localises to the microtubule organizing center. The protein resides in the centrosome. It is found in the nucleus. Its subcellular location is the cleavage furrow. Its function is as follows. May be involved in microtubule organization and stabilization. This is Fibronectin type III and SPRY domain-containing protein 1 (FSD1) from Homo sapiens (Human).